We begin with the raw amino-acid sequence, 189 residues long: uncharacterized protein (189 aa).

This sequence belongs to the OsmC/Ohr family.

This is an uncharacterized protein from Methanocaldococcus jannaschii (strain ATCC 43067 / DSM 2661 / JAL-1 / JCM 10045 / NBRC 100440) (Methanococcus jannaschii).